Here is a 399-residue protein sequence, read N- to C-terminus: Calsequestrin-2 (399 aa).

Positions 1–19 (MKRTHLFIVGIYFLSSCRA) are cleaved as a signal peptide. The residue at position 282 (Tyr282) is a Phosphotyrosine. The N-linked (GlcNAc...) asparagine glycan is linked to Asn335. A disordered region spans residues 365–399 (VLSGKINTEDDDEDDDDDDNSDEEDNDDSDDDDDE). The segment covering 373–399 (EDDDEDDDDDDNSDEEDNDDSDDDDDE) has biased composition (acidic residues). Phosphoserine occurs at positions 385 and 393.

This sequence belongs to the calsequestrin family. In terms of assembly, monomer, homodimer and homooligomer. Mostly monomeric in the absence of calcium. Forms higher oligomers in a calcium-dependent manner. Dimers associate to form tetramers, that then form linear homomer chains. Interacts with ASPH and TRDN. In terms of processing, phosphorylation in the C-terminus, probably by CK2, moderately increases calcium buffering capacity. Post-translationally, N-glycosylated.

It localises to the sarcoplasmic reticulum lumen. Calsequestrin is a high-capacity, moderate affinity, calcium-binding protein and thus acts as an internal calcium store in muscle. Calcium ions are bound by clusters of acidic residues at the protein surface, especially at the interface between subunits. Can bind around 60 Ca(2+) ions. Regulates the release of lumenal Ca(2+) via the calcium release channel RYR2; this plays an important role in triggering muscle contraction. Plays a role in excitation-contraction coupling in the heart and in regulating the rate of heart beats. The polypeptide is Calsequestrin-2 (CASQ2) (Homo sapiens (Human)).